The primary structure comprises 135 residues: Ribonuclease P protein component (135 aa).

This sequence belongs to the RnpA family. Consists of a catalytic RNA component (M1 or rnpB) and a protein subunit.

The enzyme catalyses Endonucleolytic cleavage of RNA, removing 5'-extranucleotides from tRNA precursor.. Functionally, RNaseP catalyzes the removal of the 5'-leader sequence from pre-tRNA to produce the mature 5'-terminus. It can also cleave other RNA substrates such as 4.5S RNA. The protein component plays an auxiliary but essential role in vivo by binding to the 5'-leader sequence and broadening the substrate specificity of the ribozyme. This chain is Ribonuclease P protein component, found in Pseudomonas aeruginosa (strain LESB58).